Reading from the N-terminus, the 314-residue chain is MKITSRKVVVIGTGFVGTSIAYSMINQGLVNELVLIDVNQDKAEGEALDLLDGISWAQENVIVRAGNYKDCENADIVVITAGVNQKPGQSRLDLVNTNAKIMRSIVTQVMDSGFDGIFVIASNPVDILTYVAWETSGLDQSRIVGTGTTLDTTRFRKELATKLEIDPRSVHGYIIGEHGDSEVAVWSHTTIGGKPILEFIVKNKKIGLEDLSNLSNKVKNAAYEIIDKKQATYYGIGMSTARIVKAILNNEQVILPVSAYLRGEYGQEGVFTGVPSVVNQNGVREIIELNIDAYEMKQFEKSVSQLKEVIESIK.

Residues Val16, Asp37, Lys42, Tyr68, and Gly82–Val83 contribute to the NAD(+) site. Gln85 and Arg91 together coordinate substrate. Residues Ser104, Ala121 to Asn123, and Thr146 each bind NAD(+). Residue Asn123–Asp126 participates in substrate binding. Asp151–Arg154 serves as a coordination point for substrate. Arg156 and His171 together coordinate beta-D-fructose 1,6-bisphosphate. His178 (proton acceptor) is an active-site residue. The residue at position 223 (Tyr223) is a Phosphotyrosine. Thr232 provides a ligand contact to substrate.

The protein belongs to the LDH/MDH superfamily. LDH family. Homotetramer.

It localises to the cytoplasm. It carries out the reaction (S)-lactate + NAD(+) = pyruvate + NADH + H(+). It functions in the pathway fermentation; pyruvate fermentation to lactate; (S)-lactate from pyruvate: step 1/1. Its activity is regulated as follows. Allosterically activated by fructose 1,6-bisphosphate (FBP). Its function is as follows. Catalyzes the conversion of lactate to pyruvate. This Lactococcus lactis subsp. cremoris (strain MG1363) protein is L-lactate dehydrogenase.